Consider the following 346-residue polypeptide: Methionine import ATP-binding protein MetN 1 (346 aa).

In terms of domain architecture, ABC transporter spans 2–241; sequence IELKNVSKVF…PQHVTTKKFV (240 aa). 38–45 provides a ligand contact to ATP; that stretch reads GYSGAGKS.

Belongs to the ABC transporter superfamily. Methionine importer (TC 3.A.1.24) family. The complex is composed of two ATP-binding proteins (MetN), two transmembrane proteins (MetI) and a solute-binding protein (MetQ).

It is found in the cell membrane. It carries out the reaction L-methionine(out) + ATP + H2O = L-methionine(in) + ADP + phosphate + H(+). The catalysed reaction is D-methionine(out) + ATP + H2O = D-methionine(in) + ADP + phosphate + H(+). In terms of biological role, part of the ABC transporter complex MetNIQ involved in methionine import. Responsible for energy coupling to the transport system. The sequence is that of Methionine import ATP-binding protein MetN 1 from Bacillus cereus (strain ATCC 14579 / DSM 31 / CCUG 7414 / JCM 2152 / NBRC 15305 / NCIMB 9373 / NCTC 2599 / NRRL B-3711).